Consider the following 407-residue polypeptide: Multifunctional CCA protein (407 aa).

The ATP site is built by glycine 8 and arginine 11. Glycine 8 and arginine 11 together coordinate CTP. The Mg(2+) site is built by aspartate 21 and aspartate 23. The ATP site is built by arginine 91, arginine 137, and arginine 140. Residues arginine 91, arginine 137, and arginine 140 each contribute to the CTP site. In terms of domain architecture, HD spans 228 to 329 (SGIHTLMVAQ…IKIFDKMDVW (102 aa)).

This sequence belongs to the tRNA nucleotidyltransferase/poly(A) polymerase family. Bacterial CCA-adding enzyme type 1 subfamily. In terms of assembly, monomer. Can also form homodimers and oligomers. Requires Mg(2+) as cofactor. Ni(2+) is required as a cofactor.

It catalyses the reaction a tRNA precursor + 2 CTP + ATP = a tRNA with a 3' CCA end + 3 diphosphate. The catalysed reaction is a tRNA with a 3' CCA end + 2 CTP + ATP = a tRNA with a 3' CCACCA end + 3 diphosphate. Its function is as follows. Catalyzes the addition and repair of the essential 3'-terminal CCA sequence in tRNAs without using a nucleic acid template. Adds these three nucleotides in the order of C, C, and A to the tRNA nucleotide-73, using CTP and ATP as substrates and producing inorganic pyrophosphate. tRNA 3'-terminal CCA addition is required both for tRNA processing and repair. Also involved in tRNA surveillance by mediating tandem CCA addition to generate a CCACCA at the 3' terminus of unstable tRNAs. While stable tRNAs receive only 3'-terminal CCA, unstable tRNAs are marked with CCACCA and rapidly degraded. In Aliivibrio fischeri (strain MJ11) (Vibrio fischeri), this protein is Multifunctional CCA protein.